Reading from the N-terminus, the 1347-residue chain is Protein HUA2-LIKE 3 (1347 aa).

Positions V24 to E81 constitute a PWWP domain. Disordered stretches follow at residues K110–L137, D251–K320, and D383–E402. Over residues T127 to L137 the composition is skewed to polar residues. The span at V302–G314 shows a compositional bias: low complexity. Positions N390–E402 are enriched in basic and acidic residues. Positions D845–S986 constitute a CID domain. Disordered stretches follow at residues R1037 to S1069, T1121 to Q1140, Y1147 to M1223, and R1259 to R1347. Acidic residues predominate over residues D1038–D1049. The span at T1054 to S1069 shows a compositional bias: basic and acidic residues. Residues P1181–K1191 show a composition bias toward polar residues. A compositionally biased stretch (pro residues) spans S1208 to S1217. Over residues R1259 to R1272 the composition is skewed to basic and acidic residues.

Expressed throughout young primordia, and vegetative and reproductive apices.

It localises to the nucleus. In terms of biological role, probable transcription factor that acts with partial redundancy with HULK1 and HULK2. Plays diverse and essential roles in the control of plant development, physiology and flowering time. This Arabidopsis thaliana (Mouse-ear cress) protein is Protein HUA2-LIKE 3.